Consider the following 432-residue polypeptide: Probable pectate lyase 22 (432 aa).

Residues 1 to 45 form the signal peptide; that stretch reads MFRPNSLLIPSNLSTTKSQRNTMLNSSYLSFALIFFCCILFSALA. Asn65 is a glycosylation site (N-linked (GlcNAc...) asparagine). Asp228, Asp252, and Asp256 together coordinate Ca(2+). Arg308 is a catalytic residue.

The protein belongs to the polysaccharide lyase 1 family. Ca(2+) is required as a cofactor.

The enzyme catalyses Eliminative cleavage of (1-&gt;4)-alpha-D-galacturonan to give oligosaccharides with 4-deoxy-alpha-D-galact-4-enuronosyl groups at their non-reducing ends.. It participates in glycan metabolism; pectin degradation; 2-dehydro-3-deoxy-D-gluconate from pectin: step 2/5. The sequence is that of Probable pectate lyase 22 from Arabidopsis thaliana (Mouse-ear cress).